Here is a 348-residue protein sequence, read N- to C-terminus: Protein RecA (348 aa).

66–73 is a binding site for ATP; sequence GPESSGKT.

The protein belongs to the RecA family.

It localises to the cytoplasm. Functionally, can catalyze the hydrolysis of ATP in the presence of single-stranded DNA, the ATP-dependent uptake of single-stranded DNA by duplex DNA, and the ATP-dependent hybridization of homologous single-stranded DNAs. It interacts with LexA causing its activation and leading to its autocatalytic cleavage. The chain is Protein RecA from Legionella pneumophila (strain Paris).